Consider the following 118-residue polypeptide: Large ribosomal subunit protein bL19 (118 aa).

Belongs to the bacterial ribosomal protein bL19 family.

Its function is as follows. This protein is located at the 30S-50S ribosomal subunit interface and may play a role in the structure and function of the aminoacyl-tRNA binding site. The chain is Large ribosomal subunit protein bL19 from Geotalea daltonii (strain DSM 22248 / JCM 15807 / FRC-32) (Geobacter daltonii).